The sequence spans 649 residues: Protein phosphatase Slingshot homolog 3 (649 aa).

Positions 1 to 20 (MALVTVSRSPPASGHSTPVG) are enriched in polar residues. Residues 1–32 (MALVTVSRSPPASGHSTPVGPTQDRVVRRRGR) form a disordered region. A2 is subject to N-acetylalanine. 2 positions are modified to phosphoserine: S9 and S38. The tract at residues 49–90 (LQDGGDSNVASEADSEPMEEPSGEEQPTEDQTDKGQGLQSPW) is disordered. The span at 61–78 (ADSEPMEEPSGEEQPTED) shows a compositional bias: acidic residues. Position 88 is a phosphoserine (S88). Positions 266 to 321 (EKMEQAILAELWQVLDTSDLDSVTSKEIRQALELRLGCPLQQYRDFIDNQMLLLMA) constitute a DEK-C domain. Positions 325–466 (RASRIFPHLY…LRTYQGILTA (142 aa)) constitute a Tyrosine-protein phosphatase domain. Residue C410 is the Phosphocysteine intermediate of the active site. Composition is skewed to low complexity over residues 541–551 (LEPSESESTPE) and 608–627 (TRAFQEQGQGQEQSEPGMSS). 2 disordered regions span residues 541 to 586 (LEPS…KGPW) and 608 to 649 (TRAF…EDKA). Over residues 639-649 (SVDDSREEDKA) the composition is skewed to basic and acidic residues.

Belongs to the protein-tyrosine phosphatase family. Does not bind to, or colocalize with, filamentous actin. In terms of tissue distribution, expressed in brain, small intestine and testis. Also expressed at lower levels in heart, kidney, liver, spleen and thymus.

Its subcellular location is the cytoplasm. It is found in the cytoskeleton. The protein localises to the nucleus. The enzyme catalyses O-phospho-L-tyrosyl-[protein] + H2O = L-tyrosyl-[protein] + phosphate. The catalysed reaction is O-phospho-L-seryl-[protein] + H2O = L-seryl-[protein] + phosphate. It catalyses the reaction O-phospho-L-threonyl-[protein] + H2O = L-threonyl-[protein] + phosphate. In terms of biological role, protein phosphatase which may play a role in the regulation of actin filament dynamics. Can dephosphorylate and activate the actin binding/depolymerizing factor cofilin, which subsequently binds to actin filaments and stimulates their disassembly. The polypeptide is Protein phosphatase Slingshot homolog 3 (Ssh3) (Mus musculus (Mouse)).